Reading from the N-terminus, the 504-residue chain is Maturase K (504 aa).

Belongs to the intron maturase 2 family. MatK subfamily.

Its subcellular location is the plastid. It is found in the chloroplast. Functionally, usually encoded in the trnK tRNA gene intron. Probably assists in splicing its own and other chloroplast group II introns. This Gossypium gossypioides (Mexican cotton) protein is Maturase K.